The sequence spans 142 residues: Putative pre-16S rRNA nuclease (142 aa).

It belongs to the YqgF nuclease family.

The protein localises to the cytoplasm. Could be a nuclease involved in processing of the 5'-end of pre-16S rRNA. This chain is Putative pre-16S rRNA nuclease, found in Blochmanniella floridana.